A 143-amino-acid polypeptide reads, in one-letter code: MATPLDNCLRPFPDPMVKVTAETKKISEVSSYVSANNKKNSFWGSGLLYPVALLRCQDCWAGHQTHVLSKEFTSYFSSGAGREAQHQPSAVLGSLIWLRRVYLLRAMVVHGGSQPCQRWLVIRMEVGGHPSFPGHAWLTFHLN.

This is an uncharacterized protein from Homo sapiens (Human).